Consider the following 429-residue polypeptide: Enolase (429 aa).

Gln163 is a binding site for (2R)-2-phosphoglycerate. Catalysis depends on Glu205, which acts as the Proton donor. Mg(2+)-binding residues include Asp242, Glu286, and Asp313. 4 residues coordinate (2R)-2-phosphoglycerate: Lys338, Arg367, Ser368, and Lys389. The active-site Proton acceptor is the Lys338.

Belongs to the enolase family. The cofactor is Mg(2+).

The protein localises to the cytoplasm. The protein resides in the secreted. It localises to the cell surface. It catalyses the reaction (2R)-2-phosphoglycerate = phosphoenolpyruvate + H2O. It participates in carbohydrate degradation; glycolysis; pyruvate from D-glyceraldehyde 3-phosphate: step 4/5. Catalyzes the reversible conversion of 2-phosphoglycerate (2-PG) into phosphoenolpyruvate (PEP). It is essential for the degradation of carbohydrates via glycolysis. In Geotalea uraniireducens (strain Rf4) (Geobacter uraniireducens), this protein is Enolase.